Reading from the N-terminus, the 269-residue chain is 5'-nucleotidase SurE (269 aa).

A divalent metal cation is bound by residues Asp11, Asp12, Ser43, and Asn101.

The protein belongs to the SurE nucleotidase family. Requires a divalent metal cation as cofactor.

The protein localises to the cytoplasm. It carries out the reaction a ribonucleoside 5'-phosphate + H2O = a ribonucleoside + phosphate. Nucleotidase that shows phosphatase activity on nucleoside 5'-monophosphates. The polypeptide is 5'-nucleotidase SurE (Prochlorococcus marinus (strain MIT 9515)).